Here is an 871-residue protein sequence, read N- to C-terminus: Pentatricopeptide repeat-containing protein DOT4, chloroplastic (871 aa).

The N-terminal 28 residues, 1-28 (MAMLVTNLSSSSFCFFSSPHLQNQKEIR), are a transit peptide targeting the chloroplast. PPR repeat units follow at residues 60–94 (SVTD…DIDP), 96–127 (TLCS…GFVI), 128–158 (DSNL…VKIE), 159–193 (KALF…GVEM), 194–228 (DSYT…GFGE), 229–259 (RNSV…MTER), 260–294 (DVIS…GIEI), 295–329 (DLAT…CFSR), 330–360 (EDRF…MSDR), 361–395 (SVVS…GISP), 396–430 (DVYT…DLGF), 431–465 (DIFV…DIIS), 466–497 (WNTI…RFSP), 498–532 (DERT…GYFS), 533–563 (DRHV…IASK), 564–598 (DLVS…GIEA), 599–629 (DEIS…MRHE), and 635–665 (TVEH…MPIP). Residues 670–745 (IWGALLCGCR…NPGCSWIEIK (76 aa)) are type E motif. The segment at 746-776 (GRVNIFVAGDSSNPETENIEAFLRKVRARMI) is type E(+) motif. The interval 777–871 (EEGYSPLTKY…DGHCSCRGFW (95 aa)) is type DYW motif.

Belongs to the PPR family. PCMP-H subfamily. Zn(2+) is required as a cofactor. In terms of tissue distribution, weakly expressed in leaves.

It is found in the plastid. Its subcellular location is the chloroplast. Plays a major role in single RNA editing events in chloroplasts. Acts as a site-recognition transacting factor involved in the edition of the unique site (corresponding to cytidine-488) of rpoC1, which is a plastid-encoded subunit of the chloroplast DNA-directed RNA polymerase. May provide the catalytic activity for editing site conversion. Involved in leaf vasculature patterning. This is Pentatricopeptide repeat-containing protein DOT4, chloroplastic from Arabidopsis thaliana (Mouse-ear cress).